Here is a 415-residue protein sequence, read N- to C-terminus: Branched-chain-amino-acid aminotransferase 5, chloroplastic (415 aa).

The transit peptide at 1-65 (MERSAVASGF…IVSEVSRNRR (65 aa)) directs the protein to the chloroplast. Lys261 carries the post-translational modification N6-(pyridoxal phosphate)lysine.

This sequence belongs to the class-IV pyridoxal-phosphate-dependent aminotransferase family. It depends on pyridoxal 5'-phosphate as a cofactor.

It localises to the plastid. It is found in the chloroplast. The catalysed reaction is L-leucine + 2-oxoglutarate = 4-methyl-2-oxopentanoate + L-glutamate. The enzyme catalyses L-isoleucine + 2-oxoglutarate = (S)-3-methyl-2-oxopentanoate + L-glutamate. It catalyses the reaction L-valine + 2-oxoglutarate = 3-methyl-2-oxobutanoate + L-glutamate. It participates in amino-acid biosynthesis; L-isoleucine biosynthesis; L-isoleucine from 2-oxobutanoate: step 4/4. It functions in the pathway amino-acid biosynthesis; L-leucine biosynthesis; L-leucine from 3-methyl-2-oxobutanoate: step 4/4. The protein operates within amino-acid biosynthesis; L-valine biosynthesis; L-valine from pyruvate: step 4/4. Its function is as follows. Converts 2-oxo acids to branched-chain amino acids. Acts on leucine, isoleucine and valine. This is Branched-chain-amino-acid aminotransferase 5, chloroplastic (BCAT5) from Arabidopsis thaliana (Mouse-ear cress).